The chain runs to 602 residues: Cholinesterase (602 aa).

A signal peptide spans 1–28; sequence MHSKVTIICIRFLFWFLLLCMLIGKSHT. 2 N-linked (GlcNAc...) (complex) asparagine glycosylation sites follow: Asn45 and Asn85. A disulfide bridge links Cys93 with Cys120. Trp110 provides a ligand contact to tacrine. The N-linked (GlcNAc...) (complex) asparagine glycan is linked to Asn134. 144 to 145 is a substrate binding site; it reads GG. Ser226 serves as the catalytic Acyl-ester intermediate. At Ser226 the chain carries Phosphoserine. Asn269 and Asn284 each carry an N-linked (GlcNAc...) (complex) asparagine glycan. Residues Cys280 and Cys291 are joined by a disulfide bond. The Charge relay system role is filled by Glu353. Asn369 is a glycosylation site (N-linked (GlcNAc...) (complex) asparagine). Cys428 and Cys547 are disulfide-bonded. Position 466 (His466) interacts with tacrine. His466 serves as the catalytic Charge relay system. N-linked (GlcNAc...) (complex) asparagine glycosylation occurs at Asn483. Asn509, Asn513, and Asn514 each carry an N-linked (GlcNAc...) asparagine glycan.

The protein belongs to the type-B carboxylesterase/lipase family. As to quaternary structure, homotetramer; disulfide-linked. Dimer of dimers. N-glycosylated. No other PTM detected. The major N-glycan structures are of the complex diantennary type with 1 and 2 N-acetylneuraminic acid molecules (Neu5Ac) making up approximately 33% and 47% of the total N-glycans, respectively. Only low amounts of fucosylated diantennary N-glycans are detected (approximately 2%). Triantennary N-glycans with or without fucose amount to approximately 13%, whereas 5% of the total N-glycans are of the oligomannosidic or hybrid type. Detected in blood plasma (at protein level). Present in most cells except erythrocytes.

It is found in the secreted. It carries out the reaction an acylcholine + H2O = a carboxylate + choline + H(+). Inhibited by mercury. Inhibited by Tabun. Tabun forms a covalent adduct with Ser-226 that becomes irreversible upon aging. Its function is as follows. Esterase with broad substrate specificity. Contributes to the inactivation of the neurotransmitter acetylcholine. Can degrade neurotoxic organophosphate esters. The polypeptide is Cholinesterase (BCHE) (Homo sapiens (Human)).